The chain runs to 605 residues: Progranulin (605 aa).

Residues 1 to 17 (MWTLVGWTILVAGLVAG) form the signal peptide. Intrachain disulfides connect Cys-126–Cys-139 and Cys-133–Cys-149. Residue Asn-197 is glycosylated (N-linked (GlcNAc...) asparagine). Intrachain disulfides connect Cys-297–Cys-309, Cys-303–Cys-319, Cys-310–Cys-327, Cys-320–Cys-334, Cys-328–Cys-341, and Cys-335–Cys-348. Residues 359-386 (QKTPAQPSRPSQPSPPGPPGPPSPPGPL) form a disordered region. A compositionally biased stretch (pro residues) spans 368 to 385 (PSQPSPPGPPGPPSPPGP). 2 disulfide bridges follow: Cys-392-Cys-404 and Cys-398-Cys-414.

Belongs to the granulin family. Progranulin is secreted as a homodimer. Interacts with SLPI; interaction protects progranulin from proteolysis. Interacts (via region corresponding to granulin-7 peptide) with CTSD; stabilizes CTSD and increases its proteolytic activity. Interacts (via region corresponding to granulin-7 peptide) with SORT1; this interaction mediates endocytosis and lysosome delivery of progranulin; interaction occurs at the neuronal cell surface in a stressed nervous system. Interacts with PSAP; facilitates lysosomal delivery of progranulin from the extracellular space and the biosynthetic pathway. Forms a complex with PSAP and M6PR; PSAP bridges the binding between progranulin and M6PR. Forms a complex with PSAP and SORT1; progranulin bridges the interaction between PSAP and SORT1; facilitates lysosomal targeting of PSAP via SORT1; interaction enhances PSAP uptake in primary cortical neurons. Interacts (via regions corresponding to granulin-2 and granulin-7 peptides) with GBA1; this interaction prevents aggregation of GBA1-SCARB2 complex via interaction with HSPA1A upon stress. Interacts (via region corresponding to granulin-7 peptide) with HSPA1A; mediates recruitment of HSPA1A to GBA1 and prevents GBA1 aggregation in response to stress. Cleaved by ELANE; proteolysis is blocked by SLPI and is concentration- and time-dependent and induces CXCL8/IL-8 production; granulin-3 and granulin-4 are resistant to ELANE. Cleaved by CTSL in lysosome thus regulating the maturation and turnover of progranulin within the lysosome.

It localises to the secreted. The protein resides in the lysosome. Its function is as follows. Secreted protein that acts as a key regulator of lysosomal function and as a growth factor involved in inflammation, wound healing and cell proliferation. Regulates protein trafficking to lysosomes, and also the activity of lysosomal enzymes. Also facilitates the acidification of lysosomes, causing degradation of mature CTSD by CTSB. In addition, functions as a wound-related growth factor that acts directly on dermal fibroblasts and endothelial cells to promote division, migration and the formation of capillary-like tubule structures. Also promotes epithelial cell proliferation by blocking TNF-mediated neutrophil activation preventing release of oxidants and proteases. Moreover, modulates inflammation in neurons by preserving neurons survival, axonal outgrowth and neuronal integrity. Inhibits epithelial cell proliferation and induces epithelial cells to secrete IL-8. In terms of biological role, stabilizes CTSD through interaction with CTSD leading to maintain its aspartic-type peptidase activity. The polypeptide is Progranulin (GRN) (Cavia porcellus (Guinea pig)).